Consider the following 139-residue polypeptide: Transmembrane protein 250 (139 aa).

2 consecutive transmembrane segments (helical) span residues Phe56 to Leu76 and Val116 to Phe136.

(Microbial infection) Interacts with herpes simplex virus 1/HHV-1 protein CVC2/UL25.

It is found in the membrane. It localises to the nucleus. The protein resides in the cytoplasm. In terms of biological role, may play a role in cell proliferation by promoting progression into S phase. Its function is as follows. (Microbial infection) Promotes human herpes simplex virus 1/HHV-1 proliferation. This Homo sapiens (Human) protein is Transmembrane protein 250.